Consider the following 302-residue polypeptide: Small ribosomal subunit protein uS3 (302 aa).

The KH type-2 domain occupies 17–86 (IDEFFAEELA…DPQIDVQEVE (70 aa)). The interval 222–302 (EDADAEDADA…EMDDEDGGAE (81 aa)) is disordered.

It belongs to the universal ribosomal protein uS3 family. In terms of assembly, part of the 30S ribosomal subunit.

Binds the lower part of the 30S subunit head. This chain is Small ribosomal subunit protein uS3, found in Halobacterium salinarum (strain ATCC 700922 / JCM 11081 / NRC-1) (Halobacterium halobium).